Consider the following 261-residue polypeptide: Putative hydro-lyase SH0274 (261 aa).

This sequence belongs to the D-glutamate cyclase family.

This chain is Putative hydro-lyase SH0274, found in Staphylococcus haemolyticus (strain JCSC1435).